Reading from the N-terminus, the 446-residue chain is Ribosomal protein uS12 methylthiotransferase RimO (446 aa).

The region spanning 4 to 119 (YKVGMVSLGC…IDKVIKEFIE (116 aa)) is the MTTase N-terminal domain. Cys-13, Cys-48, Cys-82, Cys-157, Cys-161, and Cys-164 together coordinate [4Fe-4S] cluster. The Radical SAM core domain occupies 143–373 (TTQKESAYIR…MLSQEKISND (231 aa)). Positions 376–442 (KLKVNKKYDI…DYDLIGVVED (67 aa)) constitute a TRAM domain.

This sequence belongs to the methylthiotransferase family. RimO subfamily. It depends on [4Fe-4S] cluster as a cofactor.

It is found in the cytoplasm. It carries out the reaction L-aspartate(89)-[ribosomal protein uS12]-hydrogen + (sulfur carrier)-SH + AH2 + 2 S-adenosyl-L-methionine = 3-methylsulfanyl-L-aspartate(89)-[ribosomal protein uS12]-hydrogen + (sulfur carrier)-H + 5'-deoxyadenosine + L-methionine + A + S-adenosyl-L-homocysteine + 2 H(+). Catalyzes the methylthiolation of an aspartic acid residue of ribosomal protein uS12. The sequence is that of Ribosomal protein uS12 methylthiotransferase RimO from Clostridium botulinum (strain Eklund 17B / Type B).